Consider the following 332-residue polypeptide: Anthranilate phosphoribosyltransferase (332 aa).

Residues Gly-78, 81 to 82 (GD), Thr-86, 88 to 91 (NVST), 106 to 114 (KHGNRAASS), and Ala-118 each bind 5-phospho-alpha-D-ribose 1-diphosphate. Residue Gly-78 coordinates anthranilate. A Mg(2+)-binding site is contributed by Ser-90. Asn-109 is an anthranilate binding site. Arg-164 serves as a coordination point for anthranilate. Mg(2+)-binding residues include Asp-223 and Glu-224.

The protein belongs to the anthranilate phosphoribosyltransferase family. Homodimer. Mg(2+) serves as cofactor.

The enzyme catalyses N-(5-phospho-beta-D-ribosyl)anthranilate + diphosphate = 5-phospho-alpha-D-ribose 1-diphosphate + anthranilate. The protein operates within amino-acid biosynthesis; L-tryptophan biosynthesis; L-tryptophan from chorismate: step 2/5. In terms of biological role, catalyzes the transfer of the phosphoribosyl group of 5-phosphorylribose-1-pyrophosphate (PRPP) to anthranilate to yield N-(5'-phosphoribosyl)-anthranilate (PRA). In Sphingopyxis alaskensis (strain DSM 13593 / LMG 18877 / RB2256) (Sphingomonas alaskensis), this protein is Anthranilate phosphoribosyltransferase.